The following is a 29-amino-acid chain: Protamine-like protein (29 aa).

The interval 1 to 29 is disordered; the sequence is MRSFDQGSTRAPARERCRRQRPEGRSAQR. Residues 12–29 are compositionally biased toward basic and acidic residues; it reads PARERCRRQRPEGRSAQR.

The sequence is that of Protamine-like protein (tpr) from Escherichia coli (strain K12).